A 506-amino-acid chain; its full sequence is D-alanine--D-alanyl carrier protein ligase (506 aa).

152 to 153 (TS) is a binding site for ATP. Residue aspartate 197 participates in D-alanine binding. 292-297 (NTYGPT) is a binding site for ATP. D-alanine is bound at residue valine 301. ATP-binding positions include aspartate 383, 395–398 (YRGR), and lysine 494. Lysine 494 contacts D-alanine.

This sequence belongs to the ATP-dependent AMP-binding enzyme family. DltA subfamily.

Its subcellular location is the cytoplasm. The catalysed reaction is holo-[D-alanyl-carrier protein] + D-alanine + ATP = D-alanyl-[D-alanyl-carrier protein] + AMP + diphosphate. Its pathway is cell wall biogenesis; lipoteichoic acid biosynthesis. Functionally, catalyzes the first step in the D-alanylation of lipoteichoic acid (LTA), the activation of D-alanine and its transfer onto the D-alanyl carrier protein (Dcp) DltC. In an ATP-dependent two-step reaction, forms a high energy D-alanyl-AMP intermediate, followed by transfer of the D-alanyl residue as a thiol ester to the phosphopantheinyl prosthetic group of the Dcp. D-alanylation of LTA plays an important role in modulating the properties of the cell wall in Gram-positive bacteria, influencing the net charge of the cell wall. This is D-alanine--D-alanyl carrier protein ligase from Lacticaseibacillus casei (strain BL23) (Lactobacillus casei).